A 221-amino-acid polypeptide reads, in one-letter code: Interleukin-12 subunit alpha (221 aa).

An N-terminal signal peptide occupies residues 1-25 (MCPLRSLLLISTLVLLHHLPHLSLG). 3 disulfides stabilise this stretch: Cys-39-Cys-112, Cys-66-Cys-198, and Cys-87-Cys-125. N-linked (GlcNAc...) asparagine glycosylation is present at Asn-95.

It belongs to the IL-6 superfamily. As to quaternary structure, heterodimer with IL12B; disulfide-linked. This heterodimer is known as interleukin IL-12. Heterodimer with EBI3/IL27B; not disulfide-linked. This heterodimer is known as interleukin IL-35. Interacts with NBR1; this interaction promotes IL-12 secretion.

The protein resides in the secreted. Heterodimerizes with IL12B to form the IL-12 cytokine or with EBI3/IL27B to form the IL-35 cytokine. IL-12 is primarily produced by professional antigen-presenting cells (APCs) such as B-cells and dendritic cells (DCs) as well as macrophages and granulocytes and regulates T-cell and natural killer-cell responses, induces the production of interferon-gamma (IFN-gamma), favors the differentiation of T-helper 1 (Th1) cells and is an important link between innate resistance and adaptive immunity. Mechanistically, exerts its biological effects through a receptor composed of IL12R1 and IL12R2 subunits. Binding to the receptor results in the rapid tyrosine phosphorylation of a number of cellular substrates including the JAK family kinases TYK2 and JAK2. In turn, recruited STAT4 gets phosphorylated and translocates to the nucleus where it regulates cytokine/growth factor responsive genes. As part of IL-35, plays essential roles in maintaining the immune homeostasis of the liver microenvironment and also functions as an immune-suppressive cytokine. Mediates biological events through unconventional receptors composed of IL12RB2 and gp130/IL6ST heterodimers or homodimers. Signaling requires the transcription factors STAT1 and STAT4, which form a unique heterodimer that binds to distinct DNA sites. In Bos taurus (Bovine), this protein is Interleukin-12 subunit alpha (IL12A).